An 83-amino-acid chain; its full sequence is MQTSMFLTLTGLVLLFVVCYASESEEKEFPKELLSSIFAADSDFKEEERGCFGYKCDYYKGCCSGYVCSPTWKWCVRPGPGRR.

The signal sequence occupies residues 1–21 (MQTSMFLTLTGLVLLFVVCYA). The propeptide occupies 22–49 (SESEEKEFPKELLSSIFAADSDFKEEER). 3 cysteine pairs are disulfide-bonded: C51/C63, C56/C68, and C62/C75.

The protein belongs to the neurotoxin 10 (Hwtx-1) family. 51 (Hntx-8) subfamily. Hntx-8 sub-subfamily. In terms of tissue distribution, expressed by the venom gland.

It localises to the secreted. Agglutinates erythrocytes. In Cyriopagopus schmidti (Chinese bird spider), this protein is U5-theraphotoxin-Hs1b 2.